Here is a 254-residue protein sequence, read N- to C-terminus: TLC domain-containing protein At5g14285 (254 aa).

6 consecutive transmembrane segments (helical) span residues 12-32 (DLPI…FIVF), 45-65 (SCLI…RAVF), 82-101 (TVLD…YIVF), 124-144 (FLVF…EVTS), 172-192 (LSPP…PLFF), and 211-231 (WLWI…ILWI). The TLC domain occupies 38–248 (QIRPEASSCL…FSERKANKIR (211 aa)).

The protein localises to the membrane. This chain is TLC domain-containing protein At5g14285, found in Arabidopsis thaliana (Mouse-ear cress).